We begin with the raw amino-acid sequence, 435 residues long: Serine--tRNA ligase (435 aa).

The interval 48-68 (MKAQRNEASKKIGEAKRNGES) is disordered. Residues 49–68 (KAQRNEASKKIGEAKRNGES) are compositionally biased toward basic and acidic residues. 230–232 (TAE) is an L-serine binding site. Residue 261–263 (RSE) coordinates ATP. Position 284 (glutamate 284) interacts with L-serine. An ATP-binding site is contributed by 348-351 (EVSS). Serine 383 is an L-serine binding site.

The protein belongs to the class-II aminoacyl-tRNA synthetase family. Type-1 seryl-tRNA synthetase subfamily. Homodimer. The tRNA molecule binds across the dimer.

It is found in the cytoplasm. It catalyses the reaction tRNA(Ser) + L-serine + ATP = L-seryl-tRNA(Ser) + AMP + diphosphate + H(+). The enzyme catalyses tRNA(Sec) + L-serine + ATP = L-seryl-tRNA(Sec) + AMP + diphosphate + H(+). It functions in the pathway aminoacyl-tRNA biosynthesis; selenocysteinyl-tRNA(Sec) biosynthesis; L-seryl-tRNA(Sec) from L-serine and tRNA(Sec): step 1/1. Its function is as follows. Catalyzes the attachment of serine to tRNA(Ser). Is also able to aminoacylate tRNA(Sec) with serine, to form the misacylated tRNA L-seryl-tRNA(Sec), which will be further converted into selenocysteinyl-tRNA(Sec). The protein is Serine--tRNA ligase of Limosilactobacillus reuteri (strain DSM 20016) (Lactobacillus reuteri).